The following is a 233-amino-acid chain: AA9 family lytic polysaccharide monooxygenase A (233 aa).

Positions 1–17 (MKLTTSVALLAAAGAQA) are cleaved as a signal peptide. Cu(2+) contacts are provided by H18 and H90. 2 disulfide bridges follow: C59-C180 and C150-C233. N132 is a glycosylation site (N-linked (GlcNAc...) asparagine). O2 contacts are provided by H166 and Q175. Y177 contacts Cu(2+).

It belongs to the polysaccharide monooxygenase AA9 family. The cofactor is Cu(2+).

It is found in the secreted. It catalyses the reaction [(1-&gt;4)-beta-D-glucosyl]n+m + reduced acceptor + O2 = 4-dehydro-beta-D-glucosyl-[(1-&gt;4)-beta-D-glucosyl]n-1 + [(1-&gt;4)-beta-D-glucosyl]m + acceptor + H2O.. Lytic polysaccharide monooxygenase (LPMO) that depolymerizes crystalline and amorphous polysaccharides via the oxidation of scissile alpha- or beta-(1-4)-glycosidic bonds, yielding C1 and C4 oxidation products. Catalysis by LPMOs requires the reduction of the active-site copper from Cu(II) to Cu(I) by a reducing agent and H(2)O(2) or O(2) as a cosubstrate. Shows endoglucanase activity on tamarind xyloglucan, as well as on beechwood xylan when combined with phosphoric acid swollen cellulose (PASC). Shows no activity on wheat arabinoxylan, konjac glucomannan, acetylated spruce galactoglucomannan, or cellopentaose. This Thermothielavioides terrestris (strain ATCC 38088 / NRRL 8126) (Thielavia terrestris) protein is AA9 family lytic polysaccharide monooxygenase A.